The sequence spans 450 residues: Phosphoglucosamine mutase (450 aa).

Ser-101 acts as the Phosphoserine intermediate in catalysis. Residues Ser-101, Asp-242, Asp-244, and Asp-246 each coordinate Mg(2+). At Ser-101 the chain carries Phosphoserine.

This sequence belongs to the phosphohexose mutase family. Requires Mg(2+) as cofactor. Activated by phosphorylation.

It carries out the reaction alpha-D-glucosamine 1-phosphate = D-glucosamine 6-phosphate. Catalyzes the conversion of glucosamine-6-phosphate to glucosamine-1-phosphate. The chain is Phosphoglucosamine mutase from Rhodopseudomonas palustris (strain TIE-1).